Here is a 974-residue protein sequence, read N- to C-terminus: Alpha-1,4 glucan phosphorylase L-2 isozyme, chloroplastic/amyloplastic (974 aa).

The N-terminal 81 residues, 1 to 81 (MATFAVSGLN…LDVFQPDSTS (81 aa)), are a transit peptide targeting the chloroplast. The interval 509–551 (ADVEKAADEEQEEEGKDDSKDEETEAVKAETTNEEEETEVKKV) is disordered. Over residues 517 to 532 (EEQEEEGKDDSKDEET) the composition is skewed to acidic residues. Residue K820 is modified to N6-(pyridoxal phosphate)lysine.

The protein belongs to the glycogen phosphorylase family. Pyridoxal 5'-phosphate serves as cofactor. As to expression, leaves.

Its subcellular location is the plastid. It is found in the chloroplast. It localises to the amyloplast. The enzyme catalyses [(1-&gt;4)-alpha-D-glucosyl](n) + phosphate = [(1-&gt;4)-alpha-D-glucosyl](n-1) + alpha-D-glucose 1-phosphate. Functionally, phosphorylase is an important allosteric enzyme in carbohydrate metabolism. Enzymes from different sources differ in their regulatory mechanisms and in their natural substrates. However, all known phosphorylases share catalytic and structural properties. The sequence is that of Alpha-1,4 glucan phosphorylase L-2 isozyme, chloroplastic/amyloplastic (STP-1) from Solanum tuberosum (Potato).